We begin with the raw amino-acid sequence, 538 residues long: Guanine nucleotide-binding protein-like 3 (538 aa).

The span at 1–45 shows a compositional bias: basic residues; that stretch reads MKRPKLKKASKRMTCHKRYKIQKKVREHHRKLRKEAKKRGHKKPK. A disordered region spans residues 1-125; it reads MKRPKLKKAS…KAKSGKQNPK (125 aa). Residues 2-46 form a basic region; it reads KRPKLKKASKRMTCHKRYKIQKKVREHHRKLRKEAKKRGHKKPKK. A coiled-coil region spans residues 54–95; that stretch reads APFKEALLREAELRKQQLEELKQQQKLDRQKEQERKRKLEIS. Basic and acidic residues predominate over residues 59-94; that stretch reads ALLREAELRKQQLEELKQQQKLDRQKEQERKRKLEI. Residue Lys-79 is modified to N6-acetyllysine. A Glycyl lysine isopeptide (Lys-Gly) (interchain with G-Cter in SUMO2) cross-link involves residue Lys-91. Residues Ser-95 and Ser-101 each carry the phosphoserine modification. The span at 95 to 110 shows a compositional bias: acidic residues; sequence SPDDEQSNVETQEESD. Over residues 115-125 the composition is skewed to basic residues; sequence KKAKSGKQNPK. In terms of domain architecture, CP-type G spans 129–307; sequence CQELKKVIEA…IIDSPCFIIS (179 aa). Residue 176-179 coordinates GTP; that stretch reads NKSD. Glycyl lysine isopeptide (Lys-Gly) (interchain with G-Cter in SUMO2) cross-links involve residues Lys-177, Lys-248, Lys-262, and Lys-270. A GTP-binding site is contributed by 256-263; it reads GFPNVGKS. The interval 277–451 is intermediate; sequence VGVSMGLTRS…HLTNKILFRS (175 aa). A GTP-binding site is contributed by 300 to 303; the sequence is DSPC. Composition is skewed to basic and acidic residues over residues 460 to 473 and 481 to 491; these read EEKDIPEESPKQTE and QEHVTGEKNAE. An acidic region spans residues 460-532; that stretch reads EEKDIPEESP…KMSEEDDAYD (73 aa). Residues 460 to 538 are disordered; the sequence is EEKDIPEESP…DAYDFTTDYI (79 aa). Phosphoserine occurs at positions 493, 505, and 518. A compositionally biased stretch (basic and acidic residues) spans 514-524; sequence PSDRSFILDKM.

The protein belongs to the TRAFAC class YlqF/YawG GTPase family. As to quaternary structure, interacts with MDM2; this interaction stabilizes MDM2. Interaction with MDM2 occurs in the nucleoplasm and is triggered by a nucleolar release mechanism, such as mitosis-induced nucleolar disassembly. May interact with p53/TP53 via its basic domain. This interaction is most probably indirect and mediated by MDM2-binding. As to expression, expressed in testis.

The protein resides in the nucleus. It localises to the nucleolus. May be required to maintain the proliferative capacity of stem cells. Stabilizes MDM2 by preventing its ubiquitination, and hence proteasomal degradation. The polypeptide is Guanine nucleotide-binding protein-like 3 (Gnl3) (Rattus norvegicus (Rat)).